Consider the following 280-residue polypeptide: Eukaryotic translation initiation factor 3 subunit F-1 (280 aa).

An MPN domain is found at 8 to 138 (VRVHPVVLFQ…LRAYICIQLG (131 aa)).

This sequence belongs to the eIF-3 subunit F family. In terms of assembly, component of the eukaryotic translation initiation factor 3 (eIF-3) complex. The eIF-3 complex interacts with pix.

The protein resides in the cytoplasm. Its function is as follows. Component of the eukaryotic translation initiation factor 3 (eIF-3) complex, which is involved in protein synthesis of a specialized repertoire of mRNAs and, together with other initiation factors, stimulates binding of mRNA and methionyl-tRNAi to the 40S ribosome. The eIF-3 complex specifically targets and initiates translation of a subset of mRNAs involved in cell proliferation. This is Eukaryotic translation initiation factor 3 subunit F-1 from Drosophila mojavensis (Fruit fly).